The primary structure comprises 311 residues: Phosphoribosylaminoimidazole-succinocarboxamide synthase (311 aa).

It belongs to the SAICAR synthetase family.

It carries out the reaction 5-amino-1-(5-phospho-D-ribosyl)imidazole-4-carboxylate + L-aspartate + ATP = (2S)-2-[5-amino-1-(5-phospho-beta-D-ribosyl)imidazole-4-carboxamido]succinate + ADP + phosphate + 2 H(+). It functions in the pathway purine metabolism; IMP biosynthesis via de novo pathway; 5-amino-1-(5-phospho-D-ribosyl)imidazole-4-carboxamide from 5-amino-1-(5-phospho-D-ribosyl)imidazole-4-carboxylate: step 1/2. This chain is Phosphoribosylaminoimidazole-succinocarboxamide synthase, found in Aromatoleum aromaticum (strain DSM 19018 / LMG 30748 / EbN1) (Azoarcus sp. (strain EbN1)).